The chain runs to 361 residues: UDP-N-acetylglucosamine--N-acetylmuramyl-(pentapeptide) pyrophosphoryl-undecaprenol N-acetylglucosamine transferase (361 aa).

UDP-N-acetyl-alpha-D-glucosamine contacts are provided by residues 11-13 (TGG), N124, R162, S193, and Q292.

It belongs to the glycosyltransferase 28 family. MurG subfamily.

The protein localises to the cell inner membrane. It catalyses the reaction di-trans,octa-cis-undecaprenyl diphospho-N-acetyl-alpha-D-muramoyl-L-alanyl-D-glutamyl-meso-2,6-diaminopimeloyl-D-alanyl-D-alanine + UDP-N-acetyl-alpha-D-glucosamine = di-trans,octa-cis-undecaprenyl diphospho-[N-acetyl-alpha-D-glucosaminyl-(1-&gt;4)]-N-acetyl-alpha-D-muramoyl-L-alanyl-D-glutamyl-meso-2,6-diaminopimeloyl-D-alanyl-D-alanine + UDP + H(+). Its pathway is cell wall biogenesis; peptidoglycan biosynthesis. Functionally, cell wall formation. Catalyzes the transfer of a GlcNAc subunit on undecaprenyl-pyrophosphoryl-MurNAc-pentapeptide (lipid intermediate I) to form undecaprenyl-pyrophosphoryl-MurNAc-(pentapeptide)GlcNAc (lipid intermediate II). The sequence is that of UDP-N-acetylglucosamine--N-acetylmuramyl-(pentapeptide) pyrophosphoryl-undecaprenol N-acetylglucosamine transferase from Elusimicrobium minutum (strain Pei191).